Consider the following 695-residue polypeptide: Follicle-stimulating hormone receptor (695 aa).

The first 17 residues, 1–17 (MALFLVALLAFLSLGSG), serve as a signal peptide directing secretion. Intrachain disulfides connect C18-C25 and C23-C32. Positions 18 to 46 (CHHRLCHCSNGVFLCQDSKVTEMPSDLPR) constitute an LRRNT domain. Residues 18 to 366 (CHHRLCHCSN…EDIMGYDILR (349 aa)) are Extracellular-facing. LRR repeat units lie at residues 48 to 70 (AVELRFVLTKLRVIPEGAFSGFG), 71 to 93 (DLEKIEISQNDVLEVIEANVFSN), 96 to 118 (KLHEIRIEKANNLLYIDPDAFQN), 121 to 142 (NLRYLLISNTGIKHLPAVHKIQ), 143 to 167 (SLQKVLLDIQDNINIHTVERNSFMG), 171 to 192 (ESMIVWLSKNGIQEIHNCAFNG), 194 to 216 (QLDELNLSDNSNLEELPNDVFQG), 219 to 239 (GPVILDISRTRIRSLPSYGLE), and 240 to 262 (NLKKLRAKSTYHLKKLPSLEKFV). N-linked (GlcNAc...) asparagine glycosylation is found at N191 and N199. Disulfide bonds link C275–C346, C276–C292, C276–C356, and C292–C338. N-linked (GlcNAc...) asparagine glycosylation is present at N293. Y335 carries the sulfotyrosine modification. The chain crosses the membrane as a helical span at residues 367 to 387 (VLIWFISILAITGNILVLVIL). The Cytoplasmic portion of the chain corresponds to 388–398 (ITSQYKLTVPR). A helical membrane pass occupies residues 399–421 (FLMCNLAFADLCIGIYLLLIASV). Topologically, residues 422–443 (DVHTKSQYHNYAIDWQTGAGCD) are extracellular. C442 and C517 are disulfide-bonded. The helical transmembrane segment at 444-465 (AAGFFTVFASELSVYTLTAITL) threads the bilayer. Over 466-485 (ERWHTITHAMQLECKVHVRH) the chain is Cytoplasmic. A helical membrane pass occupies residues 486 to 508 (AASIMLVGWVFAFAVALFPIFGI). Over 509-528 (SSYMKVSICLPMDIDSPLSQ) the chain is Extracellular. A helical membrane pass occupies residues 529–550 (LYVMSLLVLNVLAFVVICGCYT). Residues 551–573 (HIYLTVRNPNITSSSSDTKIAKR) lie on the Cytoplasmic side of the membrane. The chain crosses the membrane as a helical span at residues 574-597 (MAMLIFTDFLCMAPISFFAISASL). The Extracellular portion of the chain corresponds to 598-608 (KVPLITVSKSK). Residues 609 to 630 (ILLVLFYPINSCANPFLYAIFT) traverse the membrane as a helical segment. Topologically, residues 631 to 695 (RNFRRDFFIL…LIPLRHLAKN (65 aa)) are cytoplasmic.

The protein belongs to the G-protein coupled receptor 1 family. FSH/LSH/TSH subfamily. Homotrimer. Functions as a homotrimer binding the FSH hormone heterodimer composed of CGA and FSHB. Interacts with ARRB2. Interacts with APPL2; interaction is independent of follicle stimulating hormone stimulation. Post-translationally, N-glycosylated; indirectly required for FSH-binding, possibly via a conformational change that allows high affinity binding of hormone. In terms of processing, sulfated. In terms of tissue distribution, isoform FSH-R3 is expressed in ovary and testis, but not in kidney (at protein level).

It is found in the cell membrane. In terms of biological role, g protein-coupled receptor for follitropin, the follicle-stimulating hormone. The activity of isoform FSH-R1 is mediated by G proteins which activate adenylate cyclase. Isoform FSH-R2 and isoform FSH-R3 also bind FSH, but this does not result in activation of adenylate cyclase. Isoform FSH-R3 may be involved in calcium signaling. Through cAMP production activates the downstream PI3K-AKT and ERK1/ERK2 signaling pathways. The protein is Follicle-stimulating hormone receptor (FSHR) of Ovis aries (Sheep).